A 198-amino-acid polypeptide reads, in one-letter code: TM2 domain-containing protein 2 (198 aa).

Positions 1–27 (MRWPVPPVGYLLLGGQGLLLTFSLISS) are cleaved as a signal peptide. The Extracellular portion of the chain corresponds to 28–128 (QNQTSPVTYP…FLRGNKPCIK (101 aa)). Asn-29, Asn-40, and Asn-76 each carry an N-linked (GlcNAc...) asparagine glycan. A helical transmembrane segment spans residues 129–149 (YTGHYFITTLLYSFFLGCFGV). The TM2 domain maps to 131-179 (GHYFITTLLYSFFLGCFGVDRFCLGHTGTAVGKLLTLGGLGIWWFVDLI). At 150–166 (DRFCLGHTGTAVGKLLT) the chain is on the cytoplasmic side. A helical membrane pass occupies residues 167–187 (LGGLGIWWFVDLILLITGGLM). The Extracellular portion of the chain corresponds to 188–198 (PSDNSNWCTIY).

It belongs to the TM2 family.

Its subcellular location is the membrane. This chain is TM2 domain-containing protein 2 (tm2d2), found in Xenopus tropicalis (Western clawed frog).